We begin with the raw amino-acid sequence, 448 residues long: Tubulin alpha-5 chain (448 aa).

Positions 1–4 (MREC) match the MREC motif motif. Q11 provides a ligand contact to GTP. Position 40 is an N6-acetyllysine (K40). 7 residues coordinate GTP: E71, S140, G144, T145, T179, N206, and N228. E71 contributes to the Mg(2+) binding site. The active site involves E254.

This sequence belongs to the tubulin family. As to quaternary structure, dimer of alpha and beta chains. A typical microtubule is a hollow water-filled tube with an outer diameter of 25 nm and an inner diameter of 15 nM. Alpha-beta heterodimers associate head-to-tail to form protofilaments running lengthwise along the microtubule wall with the beta-tubulin subunit facing the microtubule plus end conferring a structural polarity. Microtubules usually have 13 protofilaments but different protofilament numbers can be found in some organisms and specialized cells. Mg(2+) is required as a cofactor. In terms of processing, some glutamate residues at the C-terminus are polyglycylated, resulting in polyglycine chains on the gamma-carboxyl group. Glycylation is mainly limited to tubulin incorporated into axonemes (cilia and flagella) whereas glutamylation is prevalent in neuronal cells, centrioles, axonemes, and the mitotic spindle. Both modifications can coexist on the same protein on adjacent residues, and lowering polyglycylation levels increases polyglutamylation, and reciprocally. The precise function of polyglycylation is still unclear. Some glutamate residues at the C-terminus are polyglutamylated, resulting in polyglutamate chains on the gamma-carboxyl group. Polyglutamylation plays a key role in microtubule severing by spastin (SPAST). SPAST preferentially recognizes and acts on microtubules decorated with short polyglutamate tails: severing activity by SPAST increases as the number of glutamates per tubulin rises from one to eight, but decreases beyond this glutamylation threshold. Post-translationally, acetylation of alpha chains at Lys-40 is located inside the microtubule lumen. This modification has been correlated with increased microtubule stability, intracellular transport and ciliary assembly.

It localises to the cytoplasm. The protein localises to the cytoskeleton. It carries out the reaction GTP + H2O = GDP + phosphate + H(+). In terms of biological role, tubulin is the major constituent of microtubules, a cylinder consisting of laterally associated linear protofilaments composed of alpha- and beta-tubulin heterodimers. Microtubules grow by the addition of GTP-tubulin dimers to the microtubule end, where a stabilizing cap forms. Below the cap, tubulin dimers are in GDP-bound state, owing to GTPase activity of alpha-tubulin. The chain is Tubulin alpha-5 chain from Gallus gallus (Chicken).